The primary structure comprises 81 residues: Photosystem I iron-sulfur center (81 aa).

2 consecutive 4Fe-4S ferredoxin-type domains span residues 2–31 and 39–68; these read AHSVKIYDTCIGCTQCVRACPTDVLEMIPW and IASAPRTEDCVGCKRCESACPTDFLSVRVY. Residues Cys11, Cys14, Cys17, Cys21, Cys48, Cys51, Cys54, and Cys58 each contribute to the [4Fe-4S] cluster site.

In terms of assembly, the eukaryotic PSI reaction center is composed of at least 11 subunits. Requires [4Fe-4S] cluster as cofactor.

Its subcellular location is the plastid. The protein localises to the chloroplast thylakoid membrane. The enzyme catalyses reduced [plastocyanin] + hnu + oxidized [2Fe-2S]-[ferredoxin] = oxidized [plastocyanin] + reduced [2Fe-2S]-[ferredoxin]. Apoprotein for the two 4Fe-4S centers FA and FB of photosystem I (PSI); essential for photochemical activity. FB is the terminal electron acceptor of PSI, donating electrons to ferredoxin. The C-terminus interacts with PsaA/B/D and helps assemble the protein into the PSI complex. Required for binding of PsaD and PsaE to PSI. PSI is a plastocyanin-ferredoxin oxidoreductase, converting photonic excitation into a charge separation, which transfers an electron from the donor P700 chlorophyll pair to the spectroscopically characterized acceptors A0, A1, FX, FA and FB in turn. The sequence is that of Photosystem I iron-sulfur center from Adiantum capillus-veneris (Maidenhair fern).